The following is a 328-amino-acid chain: DNA-directed RNA polymerase subunit alpha (328 aa).

An alpha N-terminal domain (alpha-NTD) region spans residues 1–234; that stretch reads MQGSVTEFLK…EQLDAFVDLR (234 aa). Residues 248-328 form an alpha C-terminal domain (alpha-CTD) region; it reads FXPILLRPVD…NWPPASIAED (81 aa).

This sequence belongs to the RNA polymerase alpha chain family. In terms of assembly, homodimer. The RNAP catalytic core consists of 2 alpha, 1 beta, 1 beta' and 1 omega subunit. When a sigma factor is associated with the core the holoenzyme is formed, which can initiate transcription.

The enzyme catalyses RNA(n) + a ribonucleoside 5'-triphosphate = RNA(n+1) + diphosphate. Its function is as follows. DNA-dependent RNA polymerase catalyzes the transcription of DNA into RNA using the four ribonucleoside triphosphates as substrates. The polypeptide is DNA-directed RNA polymerase subunit alpha (Haemophilus influenzae (strain ATCC 51907 / DSM 11121 / KW20 / Rd)).